Here is a 349-residue protein sequence, read N- to C-terminus: tRNA pseudouridine synthase D (349 aa).

F27 serves as a coordination point for substrate. Catalysis depends on D80, which acts as the Nucleophile. N129 lines the substrate pocket. Residues 155–303 enclose the TRUD domain; that stretch reads GVPNYFGAQR…VEASRRAMLL (149 aa). A substrate-binding site is contributed by F329.

It belongs to the pseudouridine synthase TruD family.

The catalysed reaction is uridine(13) in tRNA = pseudouridine(13) in tRNA. Functionally, responsible for synthesis of pseudouridine from uracil-13 in transfer RNAs. This chain is tRNA pseudouridine synthase D, found in Salmonella typhi.